Here is an 899-residue protein sequence, read N- to C-terminus: Bifunctional uridylyltransferase/uridylyl-removing enzyme (899 aa).

The interval 1-347 is uridylyltransferase; sequence MFISDPTDSL…PESERPEKSV (347 aa). The uridylyl-removing stretch occupies residues 348 to 718; sequence LNARFNRVGD…EHRELALDAV (371 aa). In terms of domain architecture, HD spans 465-581; sequence VDAHILLLIR…TKFANLVGNV (117 aa). 2 consecutive ACT domains span residues 719–804 and 827–899; these read QIFI…RLPR and VMSL…TPSC.

The protein belongs to the GlnD family. Mg(2+) is required as a cofactor.

The catalysed reaction is [protein-PII]-L-tyrosine + UTP = [protein-PII]-uridylyl-L-tyrosine + diphosphate. It carries out the reaction [protein-PII]-uridylyl-L-tyrosine + H2O = [protein-PII]-L-tyrosine + UMP + H(+). Uridylyltransferase (UTase) activity is inhibited by glutamine, while glutamine activates uridylyl-removing (UR) activity. Modifies, by uridylylation and deuridylylation, the PII regulatory proteins (GlnB and homologs), in response to the nitrogen status of the cell that GlnD senses through the glutamine level. Under low glutamine levels, catalyzes the conversion of the PII proteins and UTP to PII-UMP and PPi, while under higher glutamine levels, GlnD hydrolyzes PII-UMP to PII and UMP (deuridylylation). Thus, controls uridylylation state and activity of the PII proteins, and plays an important role in the regulation of nitrogen assimilation and metabolism. This Psychrobacter sp. (strain PRwf-1) protein is Bifunctional uridylyltransferase/uridylyl-removing enzyme.